A 315-amino-acid chain; its full sequence is Methenyltetrahydromethanopterin cyclohydrolase (315 aa).

This sequence belongs to the MCH family.

Its subcellular location is the cytoplasm. The enzyme catalyses 5,10-methenyl-5,6,7,8-tetrahydromethanopterin + H2O = N(5)-formyl-5,6,7,8-tetrahydromethanopterin + H(+). It participates in one-carbon metabolism; methanogenesis from CO(2); 5,10-methenyl-5,6,7,8-tetrahydromethanopterin from CO(2): step 3/3. Its function is as follows. Catalyzes the reversible interconversion of 5-formyl-H(4)MPT to methenyl-H(4)MPT(+). This is Methenyltetrahydromethanopterin cyclohydrolase from Methanosphaerula palustris (strain ATCC BAA-1556 / DSM 19958 / E1-9c).